Consider the following 229-residue polypeptide: UPF0758 protein Caur_3603 (229 aa).

The MPN domain maps to 105 to 227; it reads PIRSPADVAT…YVSLRERGLG (123 aa). Zn(2+)-binding residues include histidine 176, histidine 178, and aspartate 189. Residues 176 to 189 carry the JAMM motif motif; it reads HNHPSGEPTPSMED.

It belongs to the UPF0758 family.

This is UPF0758 protein Caur_3603 from Chloroflexus aurantiacus (strain ATCC 29366 / DSM 635 / J-10-fl).